Consider the following 562-residue polypeptide: Phosphoacetylglucosamine mutase (562 aa).

The active-site Phosphoserine intermediate is serine 74. Mg(2+)-binding residues include serine 74, aspartate 291, aspartate 293, and aspartate 295. Substrate contacts are provided by residues 395 to 397 (EAN), 526 to 530 (RPSGT), and arginine 535.

This sequence belongs to the phosphohexose mutase family. Mg(2+) is required as a cofactor.

The enzyme catalyses N-acetyl-alpha-D-glucosamine 1-phosphate = N-acetyl-D-glucosamine 6-phosphate. It functions in the pathway nucleotide-sugar biosynthesis; UDP-N-acetyl-alpha-D-glucosamine biosynthesis; N-acetyl-alpha-D-glucosamine 1-phosphate from alpha-D-glucosamine 6-phosphate (route I): step 2/2. Interconverts GlcNAc-6-P and GlcNAc-1-P. The sequence is that of Phosphoacetylglucosamine mutase from Oryza sativa subsp. japonica (Rice).